The chain runs to 457 residues: Aromatic amino acid transport protein AroP (457 aa).

Topologically, residues 1 to 20 (MMDSQQHGEQLKRGLKNRHI) are cytoplasmic. A helical transmembrane segment spans residues 21 to 41 (QLIALGGAIGTGLFLGSASVI). Gln-42 is a topological domain (periplasmic). Residues 43–63 (SAGPGIILGYAIAGFIAFLIM) traverse the membrane as a helical segment. The Cytoplasmic segment spans residues 64–86 (RQLGEMVVEEPVAGSFSHFAYKY). A helical membrane pass occupies residues 87–107 (WGGFAGFASGWNYWVLYVLVA). Topologically, residues 108 to 117 (MAELTAVGKY) are periplasmic. The helical transmembrane segment at 118 to 138 (IQFWYPEIPTWASAAAFFVII) threads the bilayer. Residues 139–155 (NAINLTNVKVFGEMEFW) are Cytoplasmic-facing. A helical transmembrane segment spans residues 156-176 (FAIIKVIAVIAMILFGAWLLF). Topologically, residues 177–201 (SDTAGPQATVRNLWEQGGFLPHGWT) are periplasmic. Residues 202–222 (GLVMMMAIIMFSFGGLELVGI) form a helical membrane-spanning segment. Topologically, residues 223 to 240 (TAAEADNPEQSIPKATNQ) are cytoplasmic. The chain crosses the membrane as a helical span at residues 241 to 261 (VIYRILIFYIGSLAVLLSLLP). Residues 262 to 271 (WTRVTADTSP) are Periplasmic-facing. Residues 272–292 (FVLIFHELGDTFVANALNIVV) form a helical membrane-spanning segment. The Cytoplasmic segment spans residues 293 to 333 (LTAALSVYNSCVYCNSRMLFGLAQQGNAPKALLNVDKRGVP). A helical membrane pass occupies residues 334 to 354 (VSSILVSAVVTALCVLLNYLA). The Periplasmic segment spans residues 355–358 (PESA). Residues 359-379 (FGLLMALVVSALVINWAMISL) traverse the membrane as a helical segment. The Cytoplasmic portion of the chain corresponds to 380–400 (AHMMFRRAKQQQGVKTRFPAL). The chain crosses the membrane as a helical span at residues 401 to 421 (FYPFGNVLCLLFMAAVLIIML). Over 422-425 (MTPG) the chain is Periplasmic. A helical transmembrane segment spans residues 426 to 446 (MAISVWLIPVWLLILGVGYLC). The Cytoplasmic portion of the chain corresponds to 447 to 457 (KEKTAKTVKAH).

This sequence belongs to the amino acid-polyamine-organocation (APC) superfamily. Amino acid transporter (AAT) (TC 2.A.3.1) family.

The protein resides in the cell inner membrane. It carries out the reaction L-phenylalanine(in) + H(+)(in) = L-phenylalanine(out) + H(+)(out). It catalyses the reaction L-tryptophan(in) + H(+)(in) = L-tryptophan(out) + H(+)(out). The enzyme catalyses L-tyrosine(in) + H(+)(in) = L-tyrosine(out) + H(+)(out). In terms of biological role, permease that is involved in the active transport across the cytoplasmic membrane of all three aromatic amino acids, phenylalanine, tyrosine and tryptophan. The protein is Aromatic amino acid transport protein AroP (aroP) of Salmonella typhi.